Consider the following 209-residue polypeptide: Superoxide dismutase [Mn/Fe] (209 aa).

Residues H38, H90, D172, and H176 each coordinate Fe(3+). H38, H90, D172, and H176 together coordinate Mn(2+).

The protein belongs to the iron/manganese superoxide dismutase family. Requires Mn(2+) as cofactor. Fe(3+) serves as cofactor.

The catalysed reaction is 2 superoxide + 2 H(+) = H2O2 + O2. Functionally, destroys superoxide anion radicals which are normally produced within the cells and which are toxic to biological systems. Catalyzes the dismutation of superoxide anion radicals into O2 and H2O2 by successive reduction and oxidation of the transition metal ion at the active site. The polypeptide is Superoxide dismutase [Mn/Fe] (sodB) (Rickettsia prowazekii (strain Madrid E)).